Here is a 1190-residue protein sequence, read N- to C-terminus: MTGRLVQYGRHRQRRSYARISEVLELPNLIEIQTSSYQWFLDEGLREMFREISPIEDFSGNLSLEFIDYSLGEPKYTVEEAKERDVTYAAPLRVKVRLINKETGEVKEQDVFMGDFPLMTETGTFIINGAERVIVSQLVRSPSVYYSDKVDKNGKRGYSATVIPNRGAWLEYETDAKDVVYVRIDRTRKLPVTVLLRALGFSSDQEIIDLLGDNEYLRNTLEKDNTDSTEKALIEIYERLRPGEPPTLENAKNLLASRFFDPKRYDLASVGRYKINKKLHIKNRLFNQRLAETIIDPETKEVIAEAGAMIDRRTLNRLLPYLEKGVGLQTYRPAEGVVDGDISVQTIKIYAPNDPDGEKVINVIGNGFIAEDVKHITPADIIASISYFFNLLHGVGDTDDIDHLGNRRLRSVGELLQNQFRIGLSRMERVVRERMSIQDTNTITPQQLINIRPVIAAIKEFFGSSQLSQFMDQTNPLAELTHKRRLSALGPGGLTRERAGFEVRDVHYSHYGRMCPIETPEGPNIGLINSLSTYAKVNKFGFIETPYRRVDPETGRVTDQIDYLTADEEDNYVVAQANVPLAEDGTFLEENVVARFRGENIVVKRDRVDYMDVSPKQVVSAATACIPFLENDDSNRALMGANMQRQAVPLLEPEAPIVGTGMEYVSAKDSGAAVICKHRGIVERVEAKEIWVRRLIEVDGKEVKGDLDKYRLLKFVRSNQGTCYNQRPIVKKGDIVEKGEILADGPSMDKGELALGRNVLVAFMTWDGYNYEDAIIMSERLVKEDVYTSIHIEEYEAESRDTKLGPEEITRDIPNVGEDALKNLDERGIVRIGAEVKDGDLLVGKVTPKGMTELTAEERLLHAIFGEKAREVRDTSLRVPHGGGGIVLDVKVFNREDGDELPPGVNQLVRVYIVQKRKISEGDKMAGRHGNKGVISRILPEEDMPFLPDGTPIDIMLNPLGVPSRMNIGQVFELHLGMAAKKLGLHIASPVFDGATEEDVWNILEEAGLARDAKTVLYDGRTGEPFDNRVSVGIMYMIKLAHMVDDKLHARSTGPYSLVTQQPLGGKAQFGGQRFGEMEVWALEAYGAAYTLQEILTVKSDDVVGRVKTYEAIVKGENIPEPGVPESFKVLIKELQSLGMDVTILTSDEQEVNMENFDDDDDHAPDAIMVDVKPAEREEAGEEKDAVTKE.

The interval Glu1155–Glu1190 is disordered. Positions Lys1173–Glu1190 are enriched in basic and acidic residues.

It belongs to the RNA polymerase beta chain family. In terms of assembly, the RNAP catalytic core consists of 2 alpha, 1 beta, 1 beta' and 1 omega subunit. When a sigma factor is associated with the core the holoenzyme is formed, which can initiate transcription.

It carries out the reaction RNA(n) + a ribonucleoside 5'-triphosphate = RNA(n+1) + diphosphate. Its function is as follows. DNA-dependent RNA polymerase catalyzes the transcription of DNA into RNA using the four ribonucleoside triphosphates as substrates. This Geobacillus kaustophilus (strain HTA426) protein is DNA-directed RNA polymerase subunit beta.